Here is a 369-residue protein sequence, read N- to C-terminus: Aminomethyltransferase (369 aa).

This sequence belongs to the GcvT family. As to quaternary structure, the glycine cleavage system is composed of four proteins: P, T, L and H.

The catalysed reaction is N(6)-[(R)-S(8)-aminomethyldihydrolipoyl]-L-lysyl-[protein] + (6S)-5,6,7,8-tetrahydrofolate = N(6)-[(R)-dihydrolipoyl]-L-lysyl-[protein] + (6R)-5,10-methylene-5,6,7,8-tetrahydrofolate + NH4(+). The glycine cleavage system catalyzes the degradation of glycine. This chain is Aminomethyltransferase, found in Xanthomonas oryzae pv. oryzae (strain MAFF 311018).